We begin with the raw amino-acid sequence, 503 residues long: Hexose transporter 1 (503 aa).

The Cytoplasmic portion of the chain corresponds to 1 to 26 (MKKSSKEISPSQSLKNGGSDHFFNTS). Residues 27–47 (LMYVLAACLASFIFGYQVSVL) form a helical membrane-spanning segment. Residues 48 to 76 (NTIKNFIVIEFGWCTGNKVECDDSTLKSS) lie on the Extracellular side of the membrane. The cysteines at positions 61 and 68 are disulfide-linked. Residues 77–97 (FLLASVFIGAVVGSGFSDYLV) traverse the membrane as a helical segment. Over 98 to 102 (QHGRR) the chain is Cytoplasmic. A helical membrane pass occupies residues 103–123 (FSLLVIYNFFILVSILTSITH). At 124–132 (HFHTILFSR) the chain is on the extracellular side. Residues 133-153 (LLSGFGVGLITVSVPMYISEM) form a helical membrane-spanning segment. Residues 154 to 163 (THKDKKGAYG) lie on the Cytoplasmic side of the membrane. The chain crosses the membrane as a helical span at residues 164-184 (VLHQLFITFGILVAVLLGMAM). Position 167 (Q167) interacts with alpha-D-glucose. Q167 is a beta-D-glucose binding site. The Extracellular segment spans residues 185 to 205 (GEAPDAKSVDALGEFQKIWWR). The helical transmembrane segment at 206–226 (LMFFFPCLISILGIVLLTFFY) threads the bilayer. At 227–291 (KEETPYYLFE…RAMQIPSYRN (65 aa)) the chain is on the cytoplasmic side. A helical transmembrane segment spans residues 292-312 (VILLGCILSGLQQFTGINVLV). Alpha-D-glucose-binding residues include Q303, Q304, and N309. Beta-D-glucose is bound at residue Q303. Residue N309 coordinates beta-D-glucose. Residues 313–329 (SNSNELYKEFLSNKLIT) lie on the Extracellular side of the membrane. A helical membrane pass occupies residues 330-350 (TLSVIMTVVNFLMTFPAIYIV). Position 339 (N339) interacts with beta-D-glucose. The Cytoplasmic portion of the chain corresponds to 351–356 (EKLGRK). The chain crosses the membrane as a helical span at residues 357–377 (TLLLCGCAGVTLAAFLPTAIA). Residues 378–391 (NQIDRSSDLVRNLS) are Extracellular-facing. The helical transmembrane segment at 392–412 (IAATFVMIISFAVSYGPVLWI) threads the bilayer. W411 contacts alpha-D-glucose. Topologically, residues 413-428 (YLHEMFPSEIKDSAAS) are cytoplasmic. A helical transmembrane segment spans residues 429–449 (LASLVNWVCAIIVVFPSDIII). At 450-454 (KKSPT) the chain is on the extracellular side. A helical membrane pass occupies residues 455-475 (ILFFIFSGMSILSFLFIFFFI). Topologically, residues 476 to 503 (KETKGGEIGTSPYITMEERQKHMGKSAV) are cytoplasmic.

It belongs to the major facilitator superfamily. Sugar transporter (TC 2.A.1.1) family. In terms of assembly, homodimer.

It is found in the cell membrane. The catalysed reaction is D-glucose(out) = D-glucose(in). It carries out the reaction D-fructose(out) = D-fructose(in). The enzyme catalyses D-galactose(in) = D-galactose(out). It catalyses the reaction D-mannose(out) = D-mannose(in). The catalysed reaction is D-glucosamine(out) = D-glucosamine(in). It carries out the reaction D-xylose(out) = D-xylose(in). With respect to regulation, inhibited by compound 3361 (3-O-((undec-10-en)-1-yl)-D-glucose). Functionally, sodium-independent facilitative hexose transporter. Can transport D-glucose and D-fructose. Can transport D-mannose, D-galactose, D-xylose and D-glucosamine. This Plasmodium vivax protein is Hexose transporter 1.